Consider the following 733-residue polypeptide: Leucine-rich repeat neuronal protein 4 (733 aa).

The N-terminal stretch at 1 to 19 is a signal peptide; it reads MRWTLMLQLLQLLLQLLMA. At 20-676 the chain is on the extracellular side; it reads QSQSLERISQ…CATFTTKPSS (657 aa). LRR repeat units lie at residues 62-82, 83-106, 107-128, 130-151, 154-175, 178-199, 207-230, 231-253, 256-278, and 281-302; these read GVTTLNLANRSLESLPSCLPR, TLRSLDGSHNLLRALSEPVLGRLP, ELRVLTLHHNRISVLHWGRDTL, ELRELDLSHNLLTELPPCAGPS, SLRSLALAGNPLRALLPRTFAC, ALRLLNLSCSELGHIAQEAFAG, ALELLDLSGTSLERVESGWIRNLP, KLKSLFLRKMPRLKTLEGDIFKM, NLRQLDCGDSPALTSVHTEIFQD, and NLQVLQFQNCNLSSFGPWNSSQ. Asn-70 carries N-linked (GlcNAc...) asparagine glycosylation. Asn-183 carries an N-linked (GlcNAc...) asparagine glycan. 5 N-linked (GlcNAc...) asparagine glycosylation sites follow: Asn-291, Asn-299, Asn-327, Asn-408, and Asn-469. The LRRCT domain maps to 311-364; the sequence is NPLICSCELAWLLVDVNKTVLHRAADTMCEPALGSTGPFSGPLSLSHLSNVCRS. Residues 395-423 form a disordered region; it reads STALSAQPGGSQQNITKVPSLTMTSPTQG. Residues 480-518 are disordered; it reads KYLEPLPTSPNPRSLPQTKQRTQATPRALHTDPPQDEIP. A compositionally biased stretch (polar residues) spans 490–504; the sequence is NPRSLPQTKQRTQAT. The region spanning 576-675 is the Fibronectin type-III domain; the sequence is TPDPPTLQGV…SCATFTTKPS (100 aa). Asn-619 carries N-linked (GlcNAc...) asparagine glycosylation. A helical membrane pass occupies residues 677–697; that stretch reads VVIFWGLCTASGLLLVSTLVL. Residues 698-733 lie on the Cytoplasmic side of the membrane; sequence SVCLWRQRWKPHRQFYDTHLVAFKNPARAEEVTQWE.

The protein resides in the membrane. Its function is as follows. May play an important role in hippocampus-dependent long-lasting memory. The sequence is that of Leucine-rich repeat neuronal protein 4 (Lrrn4) from Mus musculus (Mouse).